Reading from the N-terminus, the 180-residue chain is Guanosine-3',5'-bis(diphosphate) 3'-pyrophosphohydrolase MESH1 (180 aa).

In terms of domain architecture, HD spans 33 to 128 (YINHPIGVAR…VKLADKLYNL (96 aa)). Positions 36, 62, and 63 each coordinate Mn(2+). Catalysis depends on nucleophile residues glutamate 66 and aspartate 67. Aspartate 123 is a binding site for Mn(2+).

It belongs to the MESH1 family. Mn(2+) serves as cofactor.

It catalyses the reaction guanosine 3',5'-bis(diphosphate) + H2O = GDP + diphosphate + H(+). In terms of biological role, ppGpp hydrolyzing enzyme involved in starvation response. This Danio rerio (Zebrafish) protein is Guanosine-3',5'-bis(diphosphate) 3'-pyrophosphohydrolase MESH1 (hddc3).